The sequence spans 88 residues: UPF0297 protein LACR_0137 (88 aa).

The protein belongs to the UPF0297 family.

This chain is UPF0297 protein LACR_0137, found in Lactococcus lactis subsp. cremoris (strain SK11).